The chain runs to 768 residues: Ral guanine nucleotide dissociation stimulator-like 1 (768 aa).

One can recognise an N-terminal Ras-GEF domain in the interval Lys-65 to Gln-196. The region spanning Ser-232–Ala-501 is the Ras-GEF domain. Residue Ser-520 is modified to Phosphoserine. The segment at Met-528–Ile-623 is disordered. Composition is skewed to low complexity over residues Ser-541–Ser-561, Glu-586–Ser-596, and Ser-605–Pro-621. A Ras-associating domain is found at Asp-648 to Ser-735.

As to quaternary structure, interacts with Ras. Expressed in a wide variety of tissues with strong expression being seen in the heart, brain, kidney, spleen and testis.

Its function is as follows. Probable guanine nucleotide exchange factor. This Homo sapiens (Human) protein is Ral guanine nucleotide dissociation stimulator-like 1 (RGL1).